A 443-amino-acid chain; its full sequence is SAM50-like protein CG7639 (443 aa).

Residues 23–101 enclose the POTRA domain; the sequence is ARVDRVNVSG…QGYEVTFKGN (79 aa).

The protein belongs to the SAM50/omp85 family. As to quaternary structure, associates with the mitochondrial contact site and cristae organizing system (MICOS) complex (also known as MINOS or MitOS complex).

The protein resides in the mitochondrion outer membrane. Its function is as follows. May play a role in the maintenance of the structure of mitochondrial cristae. The protein is SAM50-like protein CG7639 of Drosophila melanogaster (Fruit fly).